A 214-amino-acid chain; its full sequence is External core antigen (214 aa).

The N-terminal stretch at 1–19 is a signal peptide; the sequence is MQLFHLCLIISCTCPTVQA. Residues 25–27 form an HBEAG region; the sequence is GWL. The interval 165 to 214 is disordered; it reads NAPILSTLPETTVVRRRDRGRSPRRRTPSPRRRRSQSPRRRRSQSRESQC. Basic residues predominate over residues 178 to 207; it reads VRRRDRGRSPRRRTPSPRRRRSQSPRRRRS. The stretch at 186 to 192 is one 1; half-length repeat; it reads SPRRRTP. The tract at residues 186–208 is 3 X 8 AA repeats of S-P-R-R-R-R-S-Q; sequence SPRRRTPSPRRRRSQSPRRRRSQ. A propeptide spanning residues 186–214 is cleaved from the precursor; sequence SPRRRTPSPRRRRSQSPRRRRSQSRESQC. 2 repeat units span residues 193 to 200 and 201 to 208.

It belongs to the orthohepadnavirus precore antigen family. In terms of assembly, homodimerizes. Phosphorylated. In terms of processing, cleaved by host furin.

The protein localises to the secreted. Its subcellular location is the host nucleus. May regulate immune response to the intracellular capsid in acting as a T-cell tolerogen, by having an immunoregulatory effect which prevents destruction of infected cells by cytotoxic T-cells. This immune regulation may predispose to chronicity during perinatal infections and prevent severe liver injury during adult infections. This is External core antigen from Hepatitis B virus genotype A2 subtype adw2 (isolate Germany/991/1990) (HBV-A).